The primary structure comprises 397 residues: Acetate kinase (397 aa).

Asn-7 contacts Mg(2+). Lys-14 is a binding site for ATP. Arg-91 contributes to the substrate binding site. Asp-148 acts as the Proton donor/acceptor in catalysis. Residues 208-212, 283-285, and 331-335 each bind ATP; these read HLGNG, DLR, and GVGEN. Glu-384 is a binding site for Mg(2+).

Belongs to the acetokinase family. In terms of assembly, homodimer. Requires Mg(2+) as cofactor. Mn(2+) is required as a cofactor.

Its subcellular location is the cytoplasm. It catalyses the reaction acetate + ATP = acetyl phosphate + ADP. Its pathway is metabolic intermediate biosynthesis; acetyl-CoA biosynthesis; acetyl-CoA from acetate: step 1/2. In terms of biological role, catalyzes the formation of acetyl phosphate from acetate and ATP. Can also catalyze the reverse reaction. This is Acetate kinase from Syntrophomonas wolfei subsp. wolfei (strain DSM 2245B / Goettingen).